Consider the following 172-residue polypeptide: Putative phosphoesterase BcerKBAB4_1135 (172 aa).

H34 functions as the Proton donor in the catalytic mechanism. 2 consecutive short sequence motifs (HXTX) follow at residues 34–37 (HITL) and 115–118 (HLTI). The active-site Proton acceptor is the H115.

It belongs to the 2H phosphoesterase superfamily. YjcG family.

In Bacillus mycoides (strain KBAB4) (Bacillus weihenstephanensis), this protein is Putative phosphoesterase BcerKBAB4_1135.